The chain runs to 97 residues: MSIVIEVKAIPKSKISAITIDKLGRLCIRITSAPENGKANREIIKLIAKTLKLPQANVEIIAGLTIKLKRIRITSSFLNEGELMNALLPSMQQKLFE.

It belongs to the UPF0235 family.

The polypeptide is UPF0235 protein Aasi_0294 (Amoebophilus asiaticus (strain 5a2)).